We begin with the raw amino-acid sequence, 500 residues long: Aromatic-L-amino-acid decarboxylase (500 aa).

An L-tryptophan-binding site is contributed by P102. S168 contributes to the pyridoxal 5'-phosphate binding site. An L-tryptophan-binding site is contributed by H203. Residue T262 participates in pyridoxal 5'-phosphate binding. L-tryptophan is bound at residue H318. The residue at position 319 (K319) is an N6-(pyridoxal phosphate)lysine. Residue Y348 coordinates L-tryptophan.

It belongs to the group II decarboxylase family. As to quaternary structure, homodimer. The cofactor is pyridoxal 5'-phosphate.

It carries out the reaction L-tryptophan + H(+) = tryptamine + CO2. The enzyme catalyses 5-hydroxy-L-tryptophan + H(+) = serotonin + CO2. Functionally, catalyzes the decarboxylation of L-tryptophan to tryptamine and L-5-hydroxytryptophan to serotonin, respectively. The polypeptide is Aromatic-L-amino-acid decarboxylase (Catharanthus roseus (Madagascar periwinkle)).